A 359-amino-acid polypeptide reads, in one-letter code: Tropomodulin-1 (359 aa).

The tract at residues 39 to 61 is disordered; it reads PDNALLPAGLRQKDQTTKAPTGP. The tropomyosin-binding stretch occupies residues 39–138; it reads PDNALLPAGL…CDIAAILGMH (100 aa).

The protein belongs to the tropomodulin family. Binds to the N-terminus of tropomyosin and to actin. Interacts with FLII.

It localises to the cytoplasm. It is found in the cytoskeleton. Functionally, blocks the elongation and depolymerization of the actin filaments at the pointed end. The Tmod/TM complex contributes to the formation of the short actin protofilament, which in turn defines the geometry of the membrane skeleton. May play an important role in regulating the organization of actin filaments by preferentially binding to a specific tropomyosin isoform at its N-terminus. The sequence is that of Tropomodulin-1 (TMOD1) from Bos taurus (Bovine).